The chain runs to 300 residues: Platelet-derived growth factor D (300 aa).

Residues 1 to 114 (QVTGNGHVQS…PGFKIYYSFV (114 aa)) enclose the CUB domain. C53 and C75 are joined by a disulfide. N220 carries N-linked (GlcNAc...) asparagine glycosylation.

This sequence belongs to the PDGF/VEGF growth factor family. In terms of assembly, homodimer; disulfide-linked. Interacts with PDGFRB homodimers, and with heterodimers formed by PDGFRA and PDGFRB. Activated by proteolytic cleavage. Proteolytic removal of the N-terminal CUB domain releasing the core domain is necessary for unmasking the receptor-binding epitopes of the core domain. Cleavage after Arg-191 or Arg-193 by urokinase plasminogen activator gives rise to the active form.

Its subcellular location is the secreted. Growth factor that plays an essential role in the regulation of embryonic development, cell proliferation, cell migration, survival and chemotaxis. Potent mitogen for cells of mesenchymal origin. Plays an important role in wound healing. Induces macrophage recruitment, increased interstitial pressure, and blood vessel maturation during angiogenesis. Can initiate events that lead to a mesangial proliferative glomerulonephritis, including influx of monocytes and macrophages and production of extracellular matrix. The sequence is that of Platelet-derived growth factor D (PDGFD) from Oryctolagus cuniculus (Rabbit).